We begin with the raw amino-acid sequence, 501 residues long: Glycerol kinase (501 aa).

Thr-16 lines the ADP pocket. Residues Thr-16, Thr-17, and Ser-18 each contribute to the ATP site. Sn-glycerol 3-phosphate is bound at residue Thr-16. Position 20 (Arg-20) interacts with ADP. The sn-glycerol 3-phosphate site is built by Arg-84, Glu-85, Tyr-135, and Asp-242. Positions 84, 85, 135, 242, and 243 each coordinate glycerol. Positions 264 and 307 each coordinate ADP. Residues Thr-264, Gly-307, Gln-311, and Gly-408 each coordinate ATP. ADP is bound at residue Gly-408.

It belongs to the FGGY kinase family.

It catalyses the reaction glycerol + ATP = sn-glycerol 3-phosphate + ADP + H(+). It participates in polyol metabolism; glycerol degradation via glycerol kinase pathway; sn-glycerol 3-phosphate from glycerol: step 1/1. Its function is as follows. Key enzyme in the regulation of glycerol uptake and metabolism. Catalyzes the phosphorylation of glycerol to yield sn-glycerol 3-phosphate. This is Glycerol kinase from Saccharolobus islandicus (strain M.14.25 / Kamchatka #1) (Sulfolobus islandicus).